Consider the following 1038-residue polypeptide: Kinesin-like protein KIN-5B (1038 aa).

A disordered region spans residues 1 to 63 (MAQTPNPSRR…GGGGGGGSEM (63 aa)). A compositionally biased stretch (basic and acidic residues) spans 24 to 34 (RPERRQLELRW). Gly residues predominate over residues 49–61 (GLTGGGGGGGGGS). The region spanning 69-410 (NVQVVLRCRP…LDYAYRAKSI (342 aa)) is the Kinesin motor domain. Position 154 to 161 (154 to 161 (GQTGTGKT)) interacts with ATP. Residues 453–502 (QERFALEEAEKKTMRDKIEYLETQNKELKMNIESCKKEYLDLEEAHSRAN) adopt a coiled-coil conformation. Residues 1013–1038 (DKGKRYVDQGTRTPRSPLMPVNHYNK) form a disordered region.

Belongs to the TRAFAC class myosin-kinesin ATPase superfamily. Kinesin family. KIN-5/BimC subfamily.

It is found in the cytoplasm. It localises to the cytoskeleton. The protein localises to the spindle. Responsible for microtubule translocation. May be important for the organization of phragmoplast-specific arrays of microtubules. Plays an essential role in stabilizing the mitotic spindle. Required during mitotic cytokinesis. The sequence is that of Kinesin-like protein KIN-5B from Oryza sativa subsp. japonica (Rice).